The sequence spans 1267 residues: Eukaryotic translation initiation factor 3 subunit A (1267 aa).

Residues 82–118 (NIKSLEDVVRAYLKLAEEKTETAKEESQQMVLDIEDL) adopt a coiled-coil conformation. A PCI domain is found at 315–498 (MQRMSTRVLL…RTLSFGSDLN (184 aa)). Composition is skewed to basic and acidic residues over residues 792–835 (EERK…LEQE), 844–1086 (YQER…DSRP), and 1098–1147 (WRER…EGSA). The disordered stretch occupies residues 792-1267 (EERKKQRKED…DDDGWTTVRR (476 aa)). 3 repeat units span residues 956 to 965 (DDDRGPRRGG), 966 to 975 (DDERPPRRGF), and 976 to 985 (DDDRGTRRGF). Residues 956–1073 (DDDRGPRRGG…DDERGGRRGM (118 aa)) form a 12 X 10 AA approximate tandem repeats of D-[DE]-[DE]-R-[GP]-[GPQT]-R-R-[GPS]-[ADFGIM] region. A 4; truncated repeat occupies 986 to 994 (DDDRGQRRG). Tandem repeats lie at residues 995–1004 (DDDRGPRRGM) and 1005–1014 (DDDRGPRRPI). The stretch at 1015–1023 (DDDRGPRRS) is one 7; truncated repeat. A run of 2 repeats spans residues 1024-1033 (DDDRGPRRGF) and 1034-1043 (DDDRGPRRGM). Residues 1044–1053 (DEPRGPRRGA) form a 10; approximate repeat. Repeat 11 spans residues 1054–1063 (DDDWGPRRGG). The 12; approximate repeat unit spans residues 1064-1073 (DDERGGRRGM). Gly residues predominate over residues 1150-1159 (RGGGGGGGGE). Over residues 1162–1256 (SSWRDSRRED…KENPRRTKNE (95 aa)) the composition is skewed to basic and acidic residues.

The protein belongs to the eIF-3 subunit A family. As to quaternary structure, component of the eukaryotic translation initiation factor 3 (eIF-3) complex, which is composed of 13 subunits: eif3a, eif3b, eif3c, eif3d, eif3e, eif3f, eif3g, eif3h, eif3i, eif3j, eif3k, eif3l and eif3m.

It localises to the cytoplasm. Its function is as follows. RNA-binding component of the eukaryotic translation initiation factor 3 (eIF-3) complex, which is involved in protein synthesis of a specialized repertoire of mRNAs and, together with other initiation factors, stimulates binding of mRNA and methionyl-tRNAi to the 40S ribosome. The eIF-3 complex specifically targets and initiates translation of a subset of mRNAs involved in cell proliferation. This chain is Eukaryotic translation initiation factor 3 subunit A (eif3a), found in Danio rerio (Zebrafish).